The primary structure comprises 256 residues: Adenosylcobinamide-GDP ribazoletransferase (256 aa).

A run of 6 helical transmembrane segments spans residues 40–60 (YFPL…WLVL), 64–84 (PAQG…TGAF), 114–134 (IGAF…QLLS), 143–163 (ILVA…SHLL), 194–214 (VVPL…GLIL), and 234–254 (CLGM…LAWM).

The protein belongs to the CobS family. Mg(2+) serves as cofactor.

The protein localises to the cell inner membrane. It catalyses the reaction alpha-ribazole + adenosylcob(III)inamide-GDP = adenosylcob(III)alamin + GMP + H(+). It carries out the reaction alpha-ribazole 5'-phosphate + adenosylcob(III)inamide-GDP = adenosylcob(III)alamin 5'-phosphate + GMP + H(+). Its pathway is cofactor biosynthesis; adenosylcobalamin biosynthesis; adenosylcobalamin from cob(II)yrinate a,c-diamide: step 7/7. Functionally, joins adenosylcobinamide-GDP and alpha-ribazole to generate adenosylcobalamin (Ado-cobalamin). Also synthesizes adenosylcobalamin 5'-phosphate from adenosylcobinamide-GDP and alpha-ribazole 5'-phosphate. This chain is Adenosylcobinamide-GDP ribazoletransferase, found in Ralstonia pickettii (strain 12J).